Reading from the N-terminus, the 434-residue chain is Serine--tRNA ligase (434 aa).

239–241 (TAE) is a binding site for L-serine. 270 to 272 (RSE) is an ATP binding site. E293 contacts L-serine. Residue 357-360 (EISS) coordinates ATP. L-serine is bound at residue S393.

It belongs to the class-II aminoacyl-tRNA synthetase family. Type-1 seryl-tRNA synthetase subfamily. In terms of assembly, homodimer. The tRNA molecule binds across the dimer.

It is found in the cytoplasm. The catalysed reaction is tRNA(Ser) + L-serine + ATP = L-seryl-tRNA(Ser) + AMP + diphosphate + H(+). It catalyses the reaction tRNA(Sec) + L-serine + ATP = L-seryl-tRNA(Sec) + AMP + diphosphate + H(+). It functions in the pathway aminoacyl-tRNA biosynthesis; selenocysteinyl-tRNA(Sec) biosynthesis; L-seryl-tRNA(Sec) from L-serine and tRNA(Sec): step 1/1. Catalyzes the attachment of serine to tRNA(Ser). Is also able to aminoacylate tRNA(Sec) with serine, to form the misacylated tRNA L-seryl-tRNA(Sec), which will be further converted into selenocysteinyl-tRNA(Sec). This chain is Serine--tRNA ligase, found in Pseudoalteromonas translucida (strain TAC 125).